Consider the following 148-residue polypeptide: Large ribosomal subunit protein uL11 (148 aa).

The protein belongs to the universal ribosomal protein uL11 family. As to quaternary structure, part of the ribosomal stalk of the 50S ribosomal subunit. Interacts with L10 and the large rRNA to form the base of the stalk. L10 forms an elongated spine to which L12 dimers bind in a sequential fashion forming a multimeric L10(L12)X complex. In terms of processing, one or more lysine residues are methylated.

Forms part of the ribosomal stalk which helps the ribosome interact with GTP-bound translation factors. This is Large ribosomal subunit protein uL11 from Myxococcus xanthus (strain DK1622).